A 902-amino-acid polypeptide reads, in one-letter code: Proline-rich transmembrane protein 4 (902 aa).

Positions 1–18 (MAGRGCLELGLFCWVLLA) are cleaved as a signal peptide. Disordered regions lie at residues 120-149 (FTPW…SQPR) and 262-337 (PPPL…SGQP). A compositionally biased stretch (low complexity) spans 125-139 (SSLPPESTSPLSGPT). Positions 271-301 (SSPSPLDSVASPSSASIKTTPVQHDPTVSTS) are enriched in polar residues. The next 5 helical transmembrane spans lie at 371-391 (AGAL…LLPW), 393-413 (CPPG…AGTT), 431-451 (ALAW…GLGL), 465-485 (PIGL…AALG), and 501-521 (GLHA…SCWG). Serine 642 carries the post-translational modification Phosphoserine. Disordered stretches follow at residues 700-721 (GARA…TVDF), 771-811 (KTGA…SLCG), and 836-872 (VLSP…ASEL). Residues 703–717 (ANTTQSPASSPSSDC) show a composition bias toward polar residues. The span at 786 to 798 (SPAPPELPSPGAW) shows a compositional bias: pro residues. 2 stretches are compositionally biased toward low complexity: residues 799–811 (PPGS…SLCG) and 843–854 (SESSPSLPASGS).

It localises to the membrane. The chain is Proline-rich transmembrane protein 4 (Prrt4) from Rattus norvegicus (Rat).